A 326-amino-acid polypeptide reads, in one-letter code: GTP 3',8-cyclase (326 aa).

Positions 6–220 (SFGRRINYLR…DRISASYELE (215 aa)) constitute a Radical SAM core domain. Position 15 (R15) interacts with GTP. 2 residues coordinate [4Fe-4S] cluster: C22 and C26. Y28 lines the S-adenosyl-L-methionine pocket. C29 contacts [4Fe-4S] cluster. Residue R65 coordinates GTP. G69 lines the S-adenosyl-L-methionine pocket. T96 serves as a coordination point for GTP. S120 contacts S-adenosyl-L-methionine. K157 is a GTP binding site. An S-adenosyl-L-methionine-binding site is contributed by M191. [4Fe-4S] cluster-binding residues include C254 and C257. 259 to 261 (RVR) contacts GTP. C271 is a [4Fe-4S] cluster binding site.

This sequence belongs to the radical SAM superfamily. MoaA family. As to quaternary structure, monomer and homodimer. The cofactor is [4Fe-4S] cluster.

The catalysed reaction is GTP + AH2 + S-adenosyl-L-methionine = (8S)-3',8-cyclo-7,8-dihydroguanosine 5'-triphosphate + 5'-deoxyadenosine + L-methionine + A + H(+). It participates in cofactor biosynthesis; molybdopterin biosynthesis. Its function is as follows. Catalyzes the cyclization of GTP to (8S)-3',8-cyclo-7,8-dihydroguanosine 5'-triphosphate. The sequence is that of GTP 3',8-cyclase from Geobacter sulfurreducens (strain ATCC 51573 / DSM 12127 / PCA).